A 377-amino-acid chain; its full sequence is Putative F-box only protein 10 (377 aa).

Positions 1 to 46 (MVSVNLPWELVEEILYRVPPQSLARFRTVCKQWNSLFDDNKFVNDH) constitute an F-box domain.

The sequence is that of Putative F-box only protein 10 (FBX10) from Arabidopsis thaliana (Mouse-ear cress).